We begin with the raw amino-acid sequence, 694 residues long: Lamina-associated polypeptide 2, isoform alpha (694 aa).

In terms of domain architecture, LEM-like spans 5–48 (LEDPSVLTKDKLKSELVANNVTLPAGEQRKDVYVQLYLQHLTAR). Disordered regions lie at residues 47-117 (ARNR…ELTN) and 150-209 (REQG…FSEL). A linker region spans residues 49–108 (NRPPLPAGTNSKGPPDFSSDEEREPTPVLGSGAAAAGRSRAAVGRKATKKTDKPRQEDKD). Threonine 57 is modified (phosphothreonine). A phosphoserine mark is found at serine 59, serine 66, and serine 67. The residue at position 74 (threonine 74) is a Phosphothreonine. Residues 78 to 93 (GSGAAAAGRSRAAVGR) are compositionally biased toward low complexity. Serine 79 bears the Phosphoserine mark. Arginine 86 and arginine 88 each carry omega-N-methylarginine. Residues 97-106 (KKTDKPRQED) show a composition bias toward basic and acidic residues. The segment covering 107–117 (KDDLDVTELTN) has biased composition (acidic residues). The LEM domain occupies 109 to 153 (DLDVTELTNEDLLDQLVKYGVNPGPIVGTTRKLYEKKLLKLREQG). Threonine 154 is modified (phosphothreonine). Over residues 155–178 (ESRSSTPLPTISSSAENTRQNGSN) the composition is skewed to polar residues. Phosphoserine occurs at positions 156 and 159. Phosphothreonine is present on residues threonine 160 and threonine 164. A phosphoserine mark is found at serine 166 and serine 168. The span at 179–191 (DSDRYSDNEEGKK) shows a compositional bias: basic and acidic residues. The Nuclear localization signal signature appears at 190-196 (KKKEHKK). Phosphoserine is present on residues serine 272, serine 312, serine 351, serine 354, serine 370, and serine 424. The disordered stretch occupies residues 338–368 (QPLCPERSHISDQSPLSSKRKALEESESSQL). A coiled-coil region spans residues 558-657 (TESCNQQLDL…VGRRYLWLKD (100 aa)). An N6-acetyllysine modification is found at lysine 656.

Belongs to the LEM family. As to quaternary structure, interacts with LMNA, BANF1 and RB1 and with chromosomes. Associates directly or indirectly with lamins at specific cell-cycle stages. Interacts with CMTM6. Phosphorylated in a mitose-specific manner. In terms of tissue distribution, expressed in many tissues. Most abundant in adult thymus and fetal liver.

The protein resides in the nucleus. The protein localises to the chromosome. In terms of biological role, may be involved in the structural organization of the nucleus and in the post-mitotic nuclear assembly. Plays an important role, together with LMNA, in the nuclear anchorage of RB1. Functionally, TP and TP5 may play a role in T-cell development and function. TP5 is an immunomodulating pentapeptide. The chain is Lamina-associated polypeptide 2, isoform alpha (TMPO) from Homo sapiens (Human).